Reading from the N-terminus, the 133-residue chain is MSKVVHTSGKRKTAIARGTVKEGTGRVKVNRKPVELYEPELARLKIFEPLELAGDIVNSVDINVRVVGGGIMGQAEAARMVIAKGLVEYTGDMNLKDRYVQYDRTMLVGDPRRSESKKFGGPGARARKQKSYR.

The interval 111-133 (PRRSESKKFGGPGARARKQKSYR) is disordered.

This sequence belongs to the universal ribosomal protein uS9 family.

The chain is Small ribosomal subunit protein uS9 from Methanosphaera stadtmanae (strain ATCC 43021 / DSM 3091 / JCM 11832 / MCB-3).